The primary structure comprises 479 residues: Aspartyl/glutamyl-tRNA(Asn/Gln) amidotransferase subunit B (479 aa).

The protein belongs to the GatB/GatE family. GatB subfamily. Heterotrimer of A, B and C subunits.

The catalysed reaction is L-glutamyl-tRNA(Gln) + L-glutamine + ATP + H2O = L-glutaminyl-tRNA(Gln) + L-glutamate + ADP + phosphate + H(+). It carries out the reaction L-aspartyl-tRNA(Asn) + L-glutamine + ATP + H2O = L-asparaginyl-tRNA(Asn) + L-glutamate + ADP + phosphate + 2 H(+). Functionally, allows the formation of correctly charged Asn-tRNA(Asn) or Gln-tRNA(Gln) through the transamidation of misacylated Asp-tRNA(Asn) or Glu-tRNA(Gln) in organisms which lack either or both of asparaginyl-tRNA or glutaminyl-tRNA synthetases. The reaction takes place in the presence of glutamine and ATP through an activated phospho-Asp-tRNA(Asn) or phospho-Glu-tRNA(Gln). In Mycoplasma mycoides subsp. mycoides SC (strain CCUG 32753 / NCTC 10114 / PG1), this protein is Aspartyl/glutamyl-tRNA(Asn/Gln) amidotransferase subunit B.